The chain runs to 390 residues: Formate-dependent phosphoribosylglycinamide formyltransferase (390 aa).

N(1)-(5-phospho-beta-D-ribosyl)glycinamide is bound by residues Glu18 to Leu19 and Glu78. ATP contacts are provided by residues Arg110, Lys151, Ser156–Gln161, Glu191–Leu194, and Glu199. The region spanning Asp115–Leu305 is the ATP-grasp domain. Positions 264 and 276 each coordinate Mg(2+). Residues Asp283, Lys353, and Arg360–Arg361 contribute to the N(1)-(5-phospho-beta-D-ribosyl)glycinamide site.

This sequence belongs to the PurK/PurT family. As to quaternary structure, homodimer.

It carries out the reaction N(1)-(5-phospho-beta-D-ribosyl)glycinamide + formate + ATP = N(2)-formyl-N(1)-(5-phospho-beta-D-ribosyl)glycinamide + ADP + phosphate + H(+). The protein operates within purine metabolism; IMP biosynthesis via de novo pathway; N(2)-formyl-N(1)-(5-phospho-D-ribosyl)glycinamide from N(1)-(5-phospho-D-ribosyl)glycinamide (formate route): step 1/1. Functionally, involved in the de novo purine biosynthesis. Catalyzes the transfer of formate to 5-phospho-ribosyl-glycinamide (GAR), producing 5-phospho-ribosyl-N-formylglycinamide (FGAR). Formate is provided by PurU via hydrolysis of 10-formyl-tetrahydrofolate. The chain is Formate-dependent phosphoribosylglycinamide formyltransferase from Prochlorococcus marinus subsp. pastoris (strain CCMP1986 / NIES-2087 / MED4).